We begin with the raw amino-acid sequence, 291 residues long: MADLDDIKDGKDFGIGIPQQNPAFTLKGSGSLDWGMQSRLARIFNPKTNRTVMLAFDHGYFQGPTTGLERIDINIAPLFEYADVLMCTRGILRSVVPAAANRPVVLRASGANSILTYLSNEAVAVAMEDAVRLNACAVAAQVYIGTEHEHQSIKNIIQLIDQGMRYGMPTMAVTGVGKDMVRDQRYFSLASRIAAEMGAQVIKTYYVDSGFERIAAGCPVPIVIAGGKKLPERDALEMCYQAIDQGASGVDMGRNIFQSDAPIAMLKAVHAIVHKNENAAAAYQLFLHEQN.

Residue lysine 203 is the Schiff-base intermediate with substrate of the active site.

The protein belongs to the DeoC/FbaB aldolase family. As to quaternary structure, homodecamer.

The protein resides in the cytoplasm. The enzyme catalyses dihydroxyacetone phosphate + acetyl-CoA = 3-hydroxy-2,4-dioxopentyl phosphate + CoA. Functionally, involved in the degradation of phospho-AI-2, thereby terminating induction of the lsr operon and closing the AI-2 signaling cycle. Catalyzes the transfer of an acetyl moiety from 3-hydroxy-5-phosphonooxypentane-2,4-dione to CoA to form glycerone phosphate and acetyl-CoA. This chain is 3-hydroxy-5-phosphonooxypentane-2,4-dione thiolase, found in Yersinia pestis bv. Antiqua (strain Antiqua).